The following is a 457-amino-acid chain: Chromosomal replication initiator protein DnaA (457 aa).

The domain I, interacts with DnaA modulators stretch occupies residues 1–75 (MDAQLNNLWE…ALKIVTSRKF (75 aa)). The interval 75–118 (FKIEFYLESDLEEEKENEEKQKEEKKDNTNDVDGSIVVSDEMSA) is domain II. The segment at 87–108 (EEKENEEKQKEEKKDNTNDVDG) is disordered. Residues 91-103 (NEEKQKEEKKDNT) show a composition bias toward basic and acidic residues. The interval 119–335 (TLNPKYTFQS…GALIRIIAYS (217 aa)) is domain III, AAA+ region. ATP is bound by residues glycine 163, glycine 165, lysine 166, and threonine 167. The interval 336-457 (SLTNRDVSVD…NDITKKLTQK (122 aa)) is domain IV, binds dsDNA.

Belongs to the DnaA family. As to quaternary structure, oligomerizes as a right-handed, spiral filament on DNA at oriC.

The protein resides in the cytoplasm. Plays an essential role in the initiation and regulation of chromosomal replication. ATP-DnaA binds to the origin of replication (oriC) to initiate formation of the DNA replication initiation complex once per cell cycle. Binds the DnaA box (a 9 base pair repeat at the origin) and separates the double-stranded (ds)DNA. Forms a right-handed helical filament on oriC DNA; dsDNA binds to the exterior of the filament while single-stranded (ss)DNA is stabiized in the filament's interior. The ATP-DnaA-oriC complex binds and stabilizes one strand of the AT-rich DNA unwinding element (DUE), permitting loading of DNA polymerase. After initiation quickly degrades to an ADP-DnaA complex that is not apt for DNA replication. Binds acidic phospholipids. The polypeptide is Chromosomal replication initiator protein DnaA (Clostridium perfringens (strain SM101 / Type A)).